Here is a 114-residue protein sequence, read N- to C-terminus: uncharacterized protein (114 aa).

This is an uncharacterized protein from Bacillus subtilis (strain 168).